A 37-amino-acid chain; its full sequence is DICDIAIAQCSLTLCQDCENTPICELAVKGSCPPPWS.

Disulfide bonds link cysteine 3/cysteine 18, cysteine 10/cysteine 32, and cysteine 15/cysteine 24.

Its subcellular location is the secreted. Its function is as follows. Mating ciliate pheromones (or gamones) are diffusible extracellular communication signals that distinguish different intraspecific classes of cells commonly referred to as 'mating types'. They prepare the latter for conjugation by changing their cell surface properties. The polypeptide is Mating pheromone Er-22 (MAT22) (Euplotes raikovi).